Consider the following 408-residue polypeptide: Arginine biosynthesis bifunctional protein ArgJ 1 (408 aa).

Residues Thr-154, Lys-180, Thr-191, Glu-277, Asn-403, and Ser-408 each contribute to the substrate site. Catalysis depends on Thr-191, which acts as the Nucleophile.

Belongs to the ArgJ family. As to quaternary structure, heterotetramer of two alpha and two beta chains.

The protein resides in the cytoplasm. The enzyme catalyses N(2)-acetyl-L-ornithine + L-glutamate = N-acetyl-L-glutamate + L-ornithine. The catalysed reaction is L-glutamate + acetyl-CoA = N-acetyl-L-glutamate + CoA + H(+). It functions in the pathway amino-acid biosynthesis; L-arginine biosynthesis; L-ornithine and N-acetyl-L-glutamate from L-glutamate and N(2)-acetyl-L-ornithine (cyclic): step 1/1. The protein operates within amino-acid biosynthesis; L-arginine biosynthesis; N(2)-acetyl-L-ornithine from L-glutamate: step 1/4. Catalyzes two activities which are involved in the cyclic version of arginine biosynthesis: the synthesis of N-acetylglutamate from glutamate and acetyl-CoA as the acetyl donor, and of ornithine by transacetylation between N(2)-acetylornithine and glutamate. This chain is Arginine biosynthesis bifunctional protein ArgJ 1, found in Clostridium acetobutylicum (strain ATCC 824 / DSM 792 / JCM 1419 / IAM 19013 / LMG 5710 / NBRC 13948 / NRRL B-527 / VKM B-1787 / 2291 / W).